A 121-amino-acid chain; its full sequence is Protein CHLORORESPIRATORY REDUCTION 42, chloroplastic (121 aa).

As to quaternary structure, biogenesis factor component of the plastidial NDH subcomplex A.

It localises to the plastid. Its subcellular location is the chloroplast. The protein resides in the chloroplast stroma. In terms of biological role, required for both formation and activity of the chloroplast NAD(P)H dehydrogenase (NDH) complex of the photosynthetic electron transport chain. Functions in assembly or stabilization of the NDH complex; probably involved, together with CRR1 and CRR6, in the incorporation of NdhJ, NdhM, NdhK and NdhI into the NDH subcomplex A assembly intermediate (NAI500) to produce the complex NAI400. This is Protein CHLORORESPIRATORY REDUCTION 42, chloroplastic from Arabidopsis thaliana (Mouse-ear cress).